A 220-amino-acid chain; its full sequence is Small ribosomal subunit protein mS23 (220 aa).

This sequence belongs to the mitochondrion-specific ribosomal protein mS23 family. As to quaternary structure, component of the mitochondrial small ribosomal subunit (mt-SSU). Mature yeast 74S mitochondrial ribosomes consist of a small (37S) and a large (54S) subunit. The 37S small subunit contains a 15S ribosomal RNA (15S mt-rRNA) and at least 32 different proteins. The 54S large subunit contains a 21S rRNA (21S mt-rRNA) and at least 45 different proteins.

Its subcellular location is the mitochondrion. In terms of biological role, component of the mitochondrial ribosome (mitoribosome), a dedicated translation machinery responsible for the synthesis of mitochondrial genome-encoded proteins, including at least some of the essential transmembrane subunits of the mitochondrial respiratory chain. The mitoribosomes are attached to the mitochondrial inner membrane and translation products are cotranslationally integrated into the membrane. The sequence is that of Small ribosomal subunit protein mS23 (rsm25) from Schizosaccharomyces pombe (strain 972 / ATCC 24843) (Fission yeast).